Here is a 319-residue protein sequence, read N- to C-terminus: Ribose-phosphate pyrophosphokinase (319 aa).

Residues 41-43 and 100-101 each bind ATP; these read DGE and RQ. Residues His134 and Asp176 each coordinate Mg(2+). Lys199 is a catalytic residue. D-ribose 5-phosphate-binding positions include Arg201, Asp225, and 229-233; that span reads DTAGT.

The protein belongs to the ribose-phosphate pyrophosphokinase family. Class I subfamily. As to quaternary structure, homohexamer. The cofactor is Mg(2+).

It localises to the cytoplasm. It carries out the reaction D-ribose 5-phosphate + ATP = 5-phospho-alpha-D-ribose 1-diphosphate + AMP + H(+). Its pathway is metabolic intermediate biosynthesis; 5-phospho-alpha-D-ribose 1-diphosphate biosynthesis; 5-phospho-alpha-D-ribose 1-diphosphate from D-ribose 5-phosphate (route I): step 1/1. Its function is as follows. Involved in the biosynthesis of the central metabolite phospho-alpha-D-ribosyl-1-pyrophosphate (PRPP) via the transfer of pyrophosphoryl group from ATP to 1-hydroxyl of ribose-5-phosphate (Rib-5-P). The sequence is that of Ribose-phosphate pyrophosphokinase from Clostridium perfringens (strain 13 / Type A).